A 246-amino-acid chain; its full sequence is 3-deoxy-manno-octulosonate cytidylyltransferase (246 aa).

Belongs to the KdsB family.

It is found in the cytoplasm. It catalyses the reaction 3-deoxy-alpha-D-manno-oct-2-ulosonate + CTP = CMP-3-deoxy-beta-D-manno-octulosonate + diphosphate. The protein operates within nucleotide-sugar biosynthesis; CMP-3-deoxy-D-manno-octulosonate biosynthesis; CMP-3-deoxy-D-manno-octulosonate from 3-deoxy-D-manno-octulosonate and CTP: step 1/1. It participates in bacterial outer membrane biogenesis; lipopolysaccharide biosynthesis. Activates KDO (a required 8-carbon sugar) for incorporation into bacterial lipopolysaccharide in Gram-negative bacteria. The protein is 3-deoxy-manno-octulosonate cytidylyltransferase of Rickettsia felis (strain ATCC VR-1525 / URRWXCal2) (Rickettsia azadi).